We begin with the raw amino-acid sequence, 208 residues long: Small ribosomal subunit protein uS4A (208 aa).

The S4 RNA-binding domain maps to 98–159 (SRLDNVAYNM…HAKSYLRIKA (62 aa)).

Belongs to the universal ribosomal protein uS4 family. In terms of assembly, part of the 30S ribosomal subunit. Contacts protein S5. The interaction surface between S4 and S5 is involved in control of translational fidelity.

In terms of biological role, one of the primary rRNA binding proteins, it binds directly to 16S rRNA where it nucleates assembly of the body of the 30S subunit. Its function is as follows. With S5 and S12 plays an important role in translational accuracy. The chain is Small ribosomal subunit protein uS4A (rpsD1) from Nitrosomonas europaea (strain ATCC 19718 / CIP 103999 / KCTC 2705 / NBRC 14298).